The sequence spans 303 residues: Glycine--tRNA ligase alpha subunit (303 aa).

The protein belongs to the class-II aminoacyl-tRNA synthetase family. Tetramer of two alpha and two beta subunits.

The protein localises to the cytoplasm. The catalysed reaction is tRNA(Gly) + glycine + ATP = glycyl-tRNA(Gly) + AMP + diphosphate. The chain is Glycine--tRNA ligase alpha subunit from Escherichia fergusonii (strain ATCC 35469 / DSM 13698 / CCUG 18766 / IAM 14443 / JCM 21226 / LMG 7866 / NBRC 102419 / NCTC 12128 / CDC 0568-73).